The chain runs to 404 residues: Calcium/calmodulin-dependent protein kinase cmkB (404 aa).

Positions 18–279 constitute a Protein kinase domain; that stretch reads YKTGKTLGAG…AHQALQHPWI (262 aa). Residues 24 to 32 and Lys-47 each bind ATP; that span reads LGAGLYSVV. The Proton acceptor role is filled by Asp-141. The residue at position 179 (Thr-179) is a Phosphothreonine; by cmkC. An autoinhibitory domain region spans residues 279-322; sequence INPPYDTTDDLGSGEDLLPNIKKNFNARRTLHKAIDTVRAINKL. The calmodulin-binding stretch occupies residues 301–323; that stretch reads KNFNARRTLHKAIDTVRAINKLR. The interval 336–404 is disordered; that stretch reads VDPKPEHVNG…WSRTAPRSER (69 aa). Composition is skewed to basic and acidic residues over residues 338–370 and 379–389; these read PKPEHVNGSEVVEDRTTPRERENEDAMEIDSRS and QIREQERKVKE.

It belongs to the protein kinase superfamily. CAMK Ser/Thr protein kinase family. CaMK subfamily. Phosphorylated by cmkC on Thr-179.

The catalysed reaction is L-seryl-[protein] + ATP = O-phospho-L-seryl-[protein] + ADP + H(+). The enzyme catalyses L-threonyl-[protein] + ATP = O-phospho-L-threonyl-[protein] + ADP + H(+). Activated by Ca(2+)/calmodulin. Binding of calmodulin results in conformational change that relieves intrasteric autoinhibition and allows phosphorylation of Thr-179 within the activation loop by cmkC. Functionally, calcium/calmodulin-dependent protein kinase that operates in the calcium-triggered CaMKK-CaMK1 signaling cascade. Required in G1-phase of the cell cycle for proper timing of the initial nuclear division after germination, but not for subsequent mitoses. Required for the normal temporal regulation of nimX activity. The sequence is that of Calcium/calmodulin-dependent protein kinase cmkB from Emericella nidulans (Aspergillus nidulans).